A 429-amino-acid polypeptide reads, in one-letter code: Cell cycle protein kinase spo4 (429 aa).

Residues 40 to 402 (YHVVKLVGAG…KAKTALQHEF (363 aa)) form the Protein kinase domain. ATP contacts are provided by residues 46–54 (VGAGSFSSV) and Lys95. Asp182 acts as the Proton acceptor in catalysis. Thr264 bears the Phosphothreonine mark.

It belongs to the protein kinase superfamily. Ser/Thr protein kinase family. CDC7 subfamily. In terms of assembly, interacts with spo6.

It localises to the nucleus. The catalysed reaction is L-seryl-[protein] + ATP = O-phospho-L-seryl-[protein] + ADP + H(+). It catalyses the reaction L-threonyl-[protein] + ATP = O-phospho-L-threonyl-[protein] + ADP + H(+). In terms of biological role, required for the initiation of meiosis II and progression through anaphase II. The chain is Cell cycle protein kinase spo4 (spo4) from Schizosaccharomyces pombe (strain 972 / ATCC 24843) (Fission yeast).